Consider the following 753-residue polypeptide: Catalase-peroxidase (753 aa).

The N-terminal stretch at methionine 1 to alanine 39 is a signal peptide. Positions tryptophan 118 to tyrosine 241 form a cross-link, tryptophyl-tyrosyl-methioninium (Trp-Tyr) (with M-267). Histidine 119 serves as the catalytic Proton acceptor. Positions tyrosine 241 to methionine 267 form a cross-link, tryptophyl-tyrosyl-methioninium (Tyr-Met) (with W-118). Histidine 282 contributes to the heme b binding site.

The protein belongs to the peroxidase family. Peroxidase/catalase subfamily. In terms of assembly, homodimer or homotetramer. Heme b is required as a cofactor. Post-translationally, formation of the three residue Trp-Tyr-Met cross-link is important for the catalase, but not the peroxidase activity of the enzyme.

It carries out the reaction H2O2 + AH2 = A + 2 H2O. The enzyme catalyses 2 H2O2 = O2 + 2 H2O. Bifunctional enzyme with both catalase and broad-spectrum peroxidase activity. The protein is Catalase-peroxidase of Pseudoalteromonas atlantica (strain T6c / ATCC BAA-1087).